Reading from the N-terminus, the 363-residue chain is Disease resistance protein RBA1 (363 aa).

Residues 12–175 (PVPKVFLSFR…EIVKEVERVL (164 aa)) enclose the TIR domain. NAD(+) contacts are provided by residues 21–26 (RGEEIR) and Gly53. Glu86 is a catalytic residue.

In terms of assembly, homooligomer; homooligomerization is required for activity.

The protein resides in the cytoplasm. It is found in the nucleus. It localises to the nucleoplasm. It catalyses the reaction NAD(+) + H2O = ADP-D-ribose + nicotinamide + H(+). The catalysed reaction is NADP(+) + H2O = ADP-D-ribose 2'-phosphate + nicotinamide + H(+). Disease resistance (R) protein that specifically recognizes the HopBA1 type III effector protein from P.syringae, and triggers cell death. Acts as a NAD(+) hydrolase (NADase): in response to pathogen-recognition, catalyzes cleavage of NAD(+) into ADP-D-ribose (ADPR) and nicotinamide; NAD(+) cleavage triggering a defense system that promotes cell death. In addition to ADPR, also generates a cyclization variant of cyclic ADPR (cADPR), termed v-cADPR, for which the cyclizing bond is unknown. Also able to hydrolyze NADP(+), but not other NAD(+)-related molecules. The chain is Disease resistance protein RBA1 from Arabidopsis thaliana (Mouse-ear cress).